Reading from the N-terminus, the 400-residue chain is Bifunctional arginine demethylase and lysyl-hydroxylase psr-1 (400 aa).

Residues R146–R310 enclose the JmjC domain. T189 is a substrate binding site. Residues H192 and D194 each coordinate Fe cation. Position 202 (N202) interacts with 2-oxoglutarate. K209 provides a ligand contact to substrate. H278 contributes to the Fe cation binding site. Residue T290 participates in 2-oxoglutarate binding. The interval D342–V400 is disordered. Low complexity predominate over residues S346–D358. The span at K378–E388 shows a compositional bias: basic and acidic residues. Over residues M390–V400 the composition is skewed to polar residues.

The protein belongs to the JMJD6 family. Interacts with ced-5 and ced-12. Fe(2+) serves as cofactor.

It is found in the nucleus. In terms of biological role, dioxygenase that can both act as a histone arginine demethylase and a lysyl-hydroxylase. The protein is Bifunctional arginine demethylase and lysyl-hydroxylase psr-1 (psr-1) of Caenorhabditis elegans.